The sequence spans 270 residues: CASP-like protein 4A1 (270 aa).

The tract at residues 1-110 is disordered; that stretch reads MEELEKTQKF…PSFSSSSSTP (110 aa). Over 1–121 the chain is Cytoplasmic; the sequence is MEELEKTQKF…ESKWASLIRK (121 aa). Residues 24-66 show a composition bias toward polar residues; sequence SSPINFEMSSRSSLHSLPQTTIESPPDSPTLSSIPDSHGSSPH. The segment covering 85–97 has biased composition (basic and acidic residues); that stretch reads NGEEEKKVSESRR. Over residues 100-110 the composition is skewed to low complexity; sequence RPSFSSSSSTP. Residues 122–142 form a helical membrane-spanning segment; the sequence is ALLGFRVIAFVSCLVSFSVMV. Over 143 to 161 the chain is Extracellular; that stretch reads SDRDKGWAHDSFYNYKEFR. Residues 162-182 form a helical membrane-spanning segment; it reads FCLAANVIGFVYSGFMICDLV. Residues 183–198 lie on the Cytoplasmic side of the membrane; it reads YLLSTSIRRSRHNLRH. Residues 199–221 form a helical membrane-spanning segment; that stretch reads FLEFGLDQMLAYLLASASTSASI. The Extracellular portion of the chain corresponds to 222–246; that stretch reads RVDDWQSNWGADKFPDLARASVALS. A helical transmembrane segment spans residues 247–267; the sequence is YVSFVAFAFCSLASGYALCAL. Over 268–270 the chain is Cytoplasmic; sequence RSI.

This sequence belongs to the Casparian strip membrane proteins (CASP) family. Homodimer and heterodimers.

Its subcellular location is the cell membrane. In Arabidopsis thaliana (Mouse-ear cress), this protein is CASP-like protein 4A1.